The primary structure comprises 207 residues: Large ribosomal subunit protein uL4 (207 aa).

Residues 44-78 are disordered; it reads MRQGTHKTKNRAEVSGGGRKPWRQKGTGRARQGSI.

This sequence belongs to the universal ribosomal protein uL4 family. Part of the 50S ribosomal subunit.

Its function is as follows. One of the primary rRNA binding proteins, this protein initially binds near the 5'-end of the 23S rRNA. It is important during the early stages of 50S assembly. It makes multiple contacts with different domains of the 23S rRNA in the assembled 50S subunit and ribosome. Functionally, forms part of the polypeptide exit tunnel. This is Large ribosomal subunit protein uL4 from Geobacillus kaustophilus (strain HTA426).